Reading from the N-terminus, the 111-residue chain is Ciprofloxacin tolerance protein (111 aa).

Residues methionine 1–asparagine 5 are Periplasmic-facing. Residues phenylalanine 6–proline 26 form a helical membrane-spanning segment. The Cytoplasmic segment spans residues tyrosine 27 to tryptophan 30. The helical transmembrane segment at leucine 31–valine 51 threads the bilayer. Residues glutamine 52–proline 58 lie on the Periplasmic side of the membrane. A helical transmembrane segment spans residues valine 59–leucine 79. Residues arginine 80 to arginine 111 lie on the Cytoplasmic side of the membrane.

It localises to the cell inner membrane. In terms of biological role, may play a role in cellular filamentation, especially in response to ciprofloxacin. Increased expression confers tolerance to the antibiotic ciprofloxacin. The polypeptide is Ciprofloxacin tolerance protein (Acinetobacter baumannii).